The following is a 463-amino-acid chain: SCF E3 ubiquitin ligase complex F-box protein pof2 (463 aa).

Residues 1–42 (MRVPNEVCFNILSYLEADELRCKSTVCTSWRNFIIPTLWEKV) enclose the F-box domain. LRR repeat units lie at residues 145–170 (CPNLKALNIGNCGLVEDTGMVQIIKR), 171–196 (CPYLNRLIIPNCRKLTDVSLQILSEK), 198–220 (DLIELDISGCEGFHNADTLSRLV), 225–247 (GLKELSMDGCTELSHFITFLNLN), 249–271 (ELDAMRALSLNNLPDLKDSDIEL), 278–299 (KLNSLFLSKCIGLTDSSLLSLT), 304–326 (SLTTLHLGHCYEITDIGVQCLLK), 328–353 (CKNITYIDFGGCLRLSDIAVSAIAKL), 354–378 (PYLQRVGLVKCICLTDLSVILLSGS), and 380–405 (SRNLERVHLSYCIGLTAKSVSYLMYN).

In terms of assembly, part of a SCF E3 ubiquitin ligase complex. Interacts with skp1.

It localises to the mitochondrion. In terms of biological role, involved in substrate recognition in ubiquitin-dependent degradation. This chain is SCF E3 ubiquitin ligase complex F-box protein pof2 (pof2), found in Schizosaccharomyces pombe (strain 972 / ATCC 24843) (Fission yeast).